The chain runs to 151 residues: Putative calcium-binding protein CML23 (151 aa).

EF-hand domains follow at residues V2–E37, M39–D74, E84–H119, and L120–A151. Residues D15, D17, D19, K21, E26, D52, D54, D56, and E63 each coordinate Ca(2+). Ca(2+) contacts are provided by D133, N135, D137, and E144.

Potential calcium sensor. The protein is Putative calcium-binding protein CML23 (CML23) of Oryza sativa subsp. japonica (Rice).